The following is a 204-amino-acid chain: Large ribosomal subunit protein uL22m (204 aa).

Residues 1 to 27 (MAASITASVWGTLLKIHRGLTASGCLP) constitute a mitochondrion transit peptide.

The protein belongs to the universal ribosomal protein uL22 family. In terms of assembly, component of the mitochondrial ribosome large subunit (39S) which comprises a 16S rRNA and about 50 distinct proteins.

Its subcellular location is the mitochondrion. This chain is Large ribosomal subunit protein uL22m (mrpl22), found in Xenopus tropicalis (Western clawed frog).